A 177-amino-acid polypeptide reads, in one-letter code: Large ribosomal subunit protein uL6 (177 aa).

The protein belongs to the universal ribosomal protein uL6 family. As to quaternary structure, part of the 50S ribosomal subunit.

Its function is as follows. This protein binds to the 23S rRNA, and is important in its secondary structure. It is located near the subunit interface in the base of the L7/L12 stalk, and near the tRNA binding site of the peptidyltransferase center. The polypeptide is Large ribosomal subunit protein uL6 (Salmonella dublin (strain CT_02021853)).